The sequence spans 146 residues: Hemoglobin subunit beta (146 aa).

Val-1 is subject to N-acetylvaline. One can recognise a Globin domain in the interval 2–146 (HLTGEEKSAV…VANALAHKYH (145 aa)). At Thr-12 the chain carries Phosphothreonine. Phosphoserine is present on Ser-44. An N6-acetyllysine modification is found at Lys-59. Residue His-63 coordinates heme b. At Lys-82 the chain carries N6-acetyllysine. His-92 is a heme b binding site. At Cys-93 the chain carries S-nitrosocysteine. Lys-144 carries the post-translational modification N6-acetyllysine.

Belongs to the globin family. In terms of assembly, heterotetramer of two alpha chains and two beta chains. In terms of tissue distribution, red blood cells.

Functionally, involved in oxygen transport from the lung to the various peripheral tissues. The protein is Hemoglobin subunit beta (HBB) of Saguinus oedipus (Cotton-top tamarin).